The primary structure comprises 585 residues: Chaperonin GroEL, chloroplastic (585 aa).

Residues Thr55–Pro58, Asp113–Thr117, Gly442, Asn507–Ala509, and Asp523 contribute to the ATP site.

This sequence belongs to the chaperonin (HSP60) family. In terms of assembly, forms a cylinder of 14 subunits composed of two heptameric rings stacked back-to-back. Interacts with the co-chaperonin GroES.

Its subcellular location is the plastid. It is found in the chloroplast. It carries out the reaction ATP + H2O + a folded polypeptide = ADP + phosphate + an unfolded polypeptide.. Together with its co-chaperonin GroES, plays an essential role in assisting protein folding. The GroEL-GroES system forms a nano-cage that allows encapsulation of the non-native substrate proteins and provides a physical environment optimized to promote and accelerate protein folding. This Pyrenomonas salina protein is Chaperonin GroEL, chloroplastic.